The following is a 1006-amino-acid chain: Beta-galactosidase (1006 aa).

The signal sequence occupies residues 1–19; sequence MKLSSACAIALLAAQAAGA. N156 carries N-linked (GlcNAc...) asparagine glycosylation. E200 acts as the Proton donor in catalysis. Residue E298 is the Nucleophile of the active site. 10 N-linked (GlcNAc...) asparagine glycosylation sites follow: N373, N402, N422, N478, N522, N622, N739, N760, N777, and N805.

The protein belongs to the glycosyl hydrolase 35 family.

It carries out the reaction Hydrolysis of terminal non-reducing beta-D-galactose residues in beta-D-galactosides.. Its function is as follows. Cleaves beta-linked terminal galactosyl residues from gangliosides, glycoproteins, and glycosaminoglycans. The polypeptide is Beta-galactosidase (lacA) (Aspergillus niger).